The chain runs to 365 residues: Formamidopyrimidine-DNA glycosylase (365 aa).

P2 functions as the Schiff-base intermediate with DNA in the catalytic mechanism. E3 serves as the catalytic Proton donor. K61 functions as the Proton donor; for beta-elimination activity in the catalytic mechanism. The tract at residues 121–150 (RGRLAGHGDGMDGTSRTGSTLPGTGGTENS) is disordered. Positions 134–150 (TSRTGSTLPGTGGTENS) are enriched in polar residues. H186, R205, and R246 together coordinate DNA. The segment at 331-365 (RVYGRGGQPCRHCGTTLATAQVAGRTTVFCPQCQR) adopts an FPG-type zinc-finger fold. Residue R355 is the Proton donor; for delta-elimination activity of the active site.

This sequence belongs to the FPG family. Monomer. It depends on Zn(2+) as a cofactor.

The enzyme catalyses Hydrolysis of DNA containing ring-opened 7-methylguanine residues, releasing 2,6-diamino-4-hydroxy-5-(N-methyl)formamidopyrimidine.. It catalyses the reaction 2'-deoxyribonucleotide-(2'-deoxyribose 5'-phosphate)-2'-deoxyribonucleotide-DNA = a 3'-end 2'-deoxyribonucleotide-(2,3-dehydro-2,3-deoxyribose 5'-phosphate)-DNA + a 5'-end 5'-phospho-2'-deoxyribonucleoside-DNA + H(+). Functionally, involved in base excision repair of DNA damaged by oxidation or by mutagenic agents. Acts as a DNA glycosylase that recognizes and removes damaged bases. Has a preference for oxidized purines, such as 7,8-dihydro-8-oxoguanine (8-oxoG). Has AP (apurinic/apyrimidinic) lyase activity and introduces nicks in the DNA strand. Cleaves the DNA backbone by beta-delta elimination to generate a single-strand break at the site of the removed base with both 3'- and 5'-phosphates. The protein is Formamidopyrimidine-DNA glycosylase of Nitratidesulfovibrio vulgaris (strain ATCC 29579 / DSM 644 / CCUG 34227 / NCIMB 8303 / VKM B-1760 / Hildenborough) (Desulfovibrio vulgaris).